Consider the following 127-residue polypeptide: Putative 2Fe-2S ferredoxin (127 aa).

Residues Cys23, Cys54, and Cys58 each coordinate [2Fe-2S] cluster.

Belongs to the 2Fe2S Shethna-type ferredoxin family. [2Fe-2S] cluster is required as a cofactor.

Functionally, ferredoxins are iron-sulfur proteins that transfer electrons in a wide variety of metabolic reactions. This chain is Putative 2Fe-2S ferredoxin (cbiW), found in Priestia megaterium (Bacillus megaterium).